Here is a 435-residue protein sequence, read N- to C-terminus: GTPase Der (435 aa).

2 consecutive EngA-type G domains span residues 4–167 (PTLA…PSED) and 175–350 (IKFS…ENQT). GTP is bound by residues 10 to 17 (GRPNVGKS), 57 to 61 (DTGGI), 119 to 122 (NKVD), 181 to 188 (GRPNVGKS), 228 to 232 (DTAGI), and 293 to 296 (NKWD). The KH-like domain occupies 351 to 435 (RRIQSSVLND…PIHIIARKRK (85 aa)).

Belongs to the TRAFAC class TrmE-Era-EngA-EngB-Septin-like GTPase superfamily. EngA (Der) GTPase family. As to quaternary structure, associates with the 50S ribosomal subunit.

Functionally, GTPase that plays an essential role in the late steps of ribosome biogenesis. This is GTPase Der from Lacticaseibacillus casei (strain BL23) (Lactobacillus casei).